The following is a 428-amino-acid chain: Threonine synthase (428 aa).

The residue at position 107 (Lys107) is an N6-(pyridoxal phosphate)lysine.

Belongs to the threonine synthase family. The cofactor is pyridoxal 5'-phosphate.

It catalyses the reaction O-phospho-L-homoserine + H2O = L-threonine + phosphate. It participates in amino-acid biosynthesis; L-threonine biosynthesis; L-threonine from L-aspartate: step 5/5. Is competitively inhibited by L-threo-3-hydroxyhomoserine phosphate. Its function is as follows. Catalyzes the gamma-elimination of phosphate from L-phosphohomoserine and the beta-addition of water to produce L-threonine. To a lesser extent, is able to slowly catalyze the deamination of L-threonine into alpha-ketobutyrate and that of L-serine and 3-chloroalanine into pyruvate. Is also able to rapidly convert vinylglycine to threonine, which proves that the pyridoxal p-quinonoid of vinylglycine is an intermediate in the TS reaction. In Escherichia coli (strain K12), this protein is Threonine synthase (thrC).